Here is an 806-residue protein sequence, read N- to C-terminus: Lon protease (806 aa).

Residues 13–206 (LPMMPIRDVV…RVAEMLDIEI (194 aa)) enclose the Lon N-terminal domain. ATP is bound at residue 356–363 (GPPGVGKT). A Lon proteolytic domain is found at 599-780 (KNEIGAATGL…DEVLKIALER (182 aa)). Residues Ser686 and Lys729 contribute to the active site.

It belongs to the peptidase S16 family. As to quaternary structure, homohexamer. Organized in a ring with a central cavity.

It is found in the cytoplasm. The enzyme catalyses Hydrolysis of proteins in presence of ATP.. Its function is as follows. ATP-dependent serine protease that mediates the selective degradation of mutant and abnormal proteins as well as certain short-lived regulatory proteins. Required for cellular homeostasis and for survival from DNA damage and developmental changes induced by stress. Degrades polypeptides processively to yield small peptide fragments that are 5 to 10 amino acids long. Binds to DNA in a double-stranded, site-specific manner. The sequence is that of Lon protease from Solibacter usitatus (strain Ellin6076).